A 449-amino-acid chain; its full sequence is Lysine-sensitive aspartokinase 3 (449 aa).

An aspartokinase region spans residues 2–245 (SEIVVSKFGG…AAKRIDEIAF (244 aa)). Position 8–11 (8–11 (KFGG)) interacts with ATP. Residues T45, E119, and 198 to 201 (RGGS) each bind substrate. ATP-binding positions include 221 to 222 (TD), Y227, R232, and 257 to 258 (KV). The interface stretch occupies residues 246–449 (AEAAEMATFG…VQKLHSNLFE (204 aa)). Residues 299–449 (FRALALRRNQ…VQKLHSNLFE (151 aa)) form a required for homodimerization region. The region spanning 313–394 (LHSLNMLHSR…GLALVALIGN (82 aa)) is the ACT domain. Residues M318, S321, 324–325 (FL), 338–340 (SVD), and 345–346 (SE) contribute to the L-lysine site.

Belongs to the aspartokinase family. In terms of assembly, homodimer. In the inactive form a homotetramer is formed.

It catalyses the reaction L-aspartate + ATP = 4-phospho-L-aspartate + ADP. Its pathway is amino-acid biosynthesis; L-lysine biosynthesis via DAP pathway; (S)-tetrahydrodipicolinate from L-aspartate: step 1/4. With respect to regulation, synthesis and activity are sensitive to the allosteric inhibitor lysine, one of the end metabolites of the aspartic acid family branched pathway. The chain is Lysine-sensitive aspartokinase 3 (lysC) from Escherichia coli (strain K12).